The following is a 63-amino-acid chain: Large ribosomal subunit protein uL29 (63 aa).

Belongs to the universal ribosomal protein uL29 family.

The sequence is that of Large ribosomal subunit protein uL29 from Vibrio parahaemolyticus serotype O3:K6 (strain RIMD 2210633).